A 507-amino-acid chain; its full sequence is MESWTWMTVVVLLGLTVRWTVSLNSYSGAGKPPMFGDYEAQRHWQEITLNLPVKQWYFNSSDNNLQYWGLDYPPLTAYHSLLCAYVAKFINPDWVALHTSRGYESQAHKLFMRTTVLAADLLIYIPAVLLYCYSLKEISPKRKIASALCILLYPGLILIDYGHFQYNSVSLGFALWGVLGVSCDWDLLGSLAFCLALNYKQMELYHSLPFFCFLLGKCFKKGLRGKGSALFIRIACTVVASFLLCWLPFLTEREHALQVVRRLFPVDRGLFEDKVANIWCSLNVFLKIKDILPRHIQIAISFCFTFLSLLPACIKLTVQPSAKGFRFTLVSCALSFFLFSFQVHEKSILLVSLPVCLVLTEIPFMSTWFLLVSTFSMLPLLLKDQLLLPSVVTVMAFLIACSTFFPMFENTSEEQLQLKSFAVSVRRHLPGFTFLPRIIQCLFLSSVITMILLTILSVTLDPPQKLPDLFSVLICFVSCVNFVFFLVYFNIVIMWDSKNGRNRKKID.

Residues Met1–Glu2 are Cytoplasmic-facing. Residues Ser3 to Leu23 form a helical membrane-spanning segment. The Lumenal segment spans residues Asn24–Thr114. A glycan (N-linked (GlcNAc...) asparagine) is linked at Asn59. A helical membrane pass occupies residues Thr115–Leu135. Over Lys136–Lys143 the chain is Cytoplasmic. The chain crosses the membrane as a helical span at residues Ile144–Phe164. Topologically, residues Gln165–Gly172 are lumenal. Residues Phe173–Phe193 traverse the membrane as a helical segment. Topologically, residues Cys194–Ala229 are cytoplasmic. Residues Leu230–Leu250 form a helical membrane-spanning segment. The Lumenal segment spans residues Thr251 to Gln297. The chain crosses the membrane as a helical span at residues Ile298 to Val318. Topologically, residues Gln319–Cys332 are cytoplasmic. The helical transmembrane segment at Ala333–Leu353 threads the bilayer. The Lumenal portion of the chain corresponds to Pro354–Glu361. The helical transmembrane segment at Ile362–Leu382 threads the bilayer. At Lys383–Gln385 the chain is on the cytoplasmic side. A helical transmembrane segment spans residues Leu386–Pro406. At Met407 to Arg437 the chain is on the lumenal side. A helical membrane pass occupies residues Ile438–Val458. The Cytoplasmic segment spans residues Thr459–Asp468. A helical transmembrane segment spans residues Leu469 to Phe489. The Lumenal segment spans residues Asn490–Asp507.

The protein belongs to the ALG6/ALG8 glucosyltransferase family.

The protein localises to the endoplasmic reticulum membrane. It catalyses the reaction an alpha-D-Man-(1-&gt;2)-alpha-D-Man-(1-&gt;2)-alpha-D-Man-(1-&gt;3)-[alpha-D-Man-(1-&gt;2)-alpha-D-Man-(1-&gt;3)-[alpha-D-Man-(1-&gt;2)-alpha-D-Man-(1-&gt;6)]-alpha-D-Man-(1-&gt;6)]-beta-D-Man-(1-&gt;4)-beta-D-GlcNAc-(1-&gt;4)-alpha-D-GlcNAc-diphospho-di-trans,poly-cis-dolichol + a di-trans,poly-cis-dolichyl beta-D-glucosyl phosphate = an alpha-D-Glc-(1-&gt;3)-alpha-D-Man-(1-&gt;2)-alpha-D-Man-(1-&gt;2)-alpha-D-Man-(1-&gt;3)-[alpha-D-Man-(1-&gt;2)-alpha-D-Man-(1-&gt;3)-[alpha-D-Man-(1-&gt;2)-alpha-D-Man-(1-&gt;6)]-alpha-D-Man-(1-&gt;6)]-beta-D-Man-(1-&gt;4)-beta-D-GlcNAc-(1-&gt;4)-alpha-D-GlcNAc-diphospho-di-trans,poly-cis-dolichol + a di-trans,poly-cis-dolichyl phosphate + H(+). Its pathway is protein modification; protein glycosylation. Its function is as follows. Dolichyl pyrophosphate Man9GlcNAc2 alpha-1,3-glucosyltransferase that operates in the biosynthetic pathway of dolichol-linked oligosaccharides, the glycan precursors employed in protein asparagine (N)-glycosylation. The assembly of dolichol-linked oligosaccharides begins on the cytosolic side of the endoplasmic reticulum membrane and finishes in its lumen. The sequential addition of sugars to dolichol pyrophosphate produces dolichol-linked oligosaccharides containing fourteen sugars, including two GlcNAcs, nine mannoses and three glucoses. Once assembled, the oligosaccharide is transferred from the lipid to nascent proteins by oligosaccharyltransferases. In the lumen of the endoplasmic reticulum, adds the first glucose residue from dolichyl phosphate glucose (Dol-P-Glc) onto the lipid-linked oligosaccharide intermediate Man(9)GlcNAc(2)-PP-Dol to produce Glc(1)Man(9)GlcNAc(2)-PP-Dol. Glc(1)Man(9)GlcNAc(2)-PP-Dol is a substrate for ALG8, the following enzyme in the biosynthetic pathway. This Rattus norvegicus (Rat) protein is Dolichyl pyrophosphate Man9GlcNAc2 alpha-1,3-glucosyltransferase.